The sequence spans 108 residues: Nucleoid-associated protein CHAB381_0200 (108 aa).

Belongs to the YbaB/EbfC family. As to quaternary structure, homodimer.

The protein resides in the cytoplasm. The protein localises to the nucleoid. Functionally, binds to DNA and alters its conformation. May be involved in regulation of gene expression, nucleoid organization and DNA protection. This Campylobacter hominis (strain ATCC BAA-381 / DSM 21671 / CCUG 45161 / LMG 19568 / NCTC 13146 / CH001A) protein is Nucleoid-associated protein CHAB381_0200.